The following is a 297-amino-acid chain: Carboxysome assembly protein CcmO (297 aa).

The tract at residues 1-29 (MPTSPTMTSVPIARSPRPSYQQINQHQPS) is disordered. Residues 18–29 (PSYQQINQHQPS) are compositionally biased toward polar residues. BMC domains lie at 32-116 (ALGL…AVFP) and 138-222 (SIGL…HTLP).

Belongs to the bacterial microcompartments protein family. As to quaternary structure, homooligomerizes, possibly as a trimer, interacts with CcmK in the carboxysome.

It is found in the carboxysome. Required for formation of the carboxysome, a polyhedral inclusion where RuBisCO (ribulose bisphosphate carboxylase, rbcL-rbcS) is sequestered. Required for recruitment of major shell protein CcmK2 to the pre-carboxysome. Suggested to be a carboxysome shell protein. The chain is Carboxysome assembly protein CcmO from Synechocystis sp. (strain ATCC 27184 / PCC 6803 / Kazusa).